The chain runs to 226 residues: Lysosomal-associated transmembrane protein 4B (226 aa).

Transmembrane regions (helical) follow at residues 26–46 (ILLG…LLSA), 72–92 (MCIA…ATYG), 100–120 (WIIP…LVAV), and 153–173 (CLVL…GYLI). A required for NEDD4 interaction region spans residues 205-221 (PPYDDATVNSATKEPPP).

Belongs to the LAPTM4/LAPTM5 transporter family. In terms of assembly, homooligomer; upon reaching the lysosomes. Interacts with MCOLN1. Interacts with NEDD4; may play a role in the lysosomal sorting of LAPTM4B; enhances HGS association with NEDD4; mediates inhibition of EGFR degradation. Interacts with PIP5K1C; promotes SNX5 association with LAPTM4B; kinase activity of PIP5K1C is required; interaction is regulated by phosphatidylinositol 4,5-bisphosphate generated by PIP5K1C. Interacts with HGS; promotes HGS ubiquitination. Interacts with SNX5. Interacts with SLC3A2 and SLC7A5; recruits SLC3A2 and SLC7A5 to lysosomes to promote leucine uptake into these organelles and is required for mTORC1 activation. Interacts with LRRC32; decreases TGFB1 production in regulatory T cells. Interacts with BECN1; competes with EGFR for LAPTM4B binding; regulates EGFR activity. Interacts with EGFR; positively correlates with EGFR activation. Undergoes proteolytic cleavage following delivery to the lysosomes. In terms of processing, ubiquitinated by NEDD4. Strongly expressed in fetal ovary, testis, adrenal gland, liver and uterus, and weakly expressed in the spleen.

It localises to the endomembrane system. The protein resides in the late endosome membrane. It is found in the cell membrane. Its subcellular location is the cell projection. The protein localises to the lysosome membrane. It localises to the endosome membrane. The protein resides in the endosome. It is found in the multivesicular body membrane. Its subcellular location is the multivesicular body lumen. Its function is as follows. Required for optimal lysosomal function. Blocks EGF-stimulated EGFR intraluminal sorting and degradation. Conversely by binding with the phosphatidylinositol 4,5-bisphosphate, regulates its PIP5K1C interaction, inhibits HGS ubiquitination and relieves LAPTM4B inhibition of EGFR degradation. Recruits SLC3A2 and SLC7A5 (the Leu transporter) to the lysosome, promoting entry of leucine and other essential amino acid (EAA) into the lysosome, stimulating activation of proton-transporting vacuolar (V)-ATPase protein pump (V-ATPase) and hence mTORC1 activation. Plays a role as negative regulator of TGFB1 production in regulatory T cells. Binds ceramide and facilitates its exit from late endosome in order to control cell death pathways. This chain is Lysosomal-associated transmembrane protein 4B, found in Bos taurus (Bovine).